A 72-amino-acid chain; its full sequence is Light-harvesting polypeptide B-885 alpha-1 chain (72 aa).

Topologically, residues 1-16 (SAPAQWKLWLVMDPRT) are cytoplasmic. Residues 17–37 (VMIGTAAWLGVLALLIHFLLL) traverse the membrane as a helical segment. His33 is an a bacteriochlorophyll binding site. The Periplasmic portion of the chain corresponds to 38–72 (GTERFNWIDTGLKEQKATAAAQAAITPAPVTAAAK).

This sequence belongs to the antenna complex alpha subunit family. The core complex is formed by different alpha and beta chains, binding bacteriochlorophyll molecules, and arranged most probably in tetrameric structures disposed around the reaction center. The non-pigmented gamma chains may constitute additional components.

It localises to the cell inner membrane. In terms of biological role, antenna complexes are light-harvesting systems, which transfer the excitation energy to the reaction centers. This chain is Light-harvesting polypeptide B-885 alpha-1 chain, found in Rhodocyclus tenuis (Rhodospirillum tenue).